The sequence spans 455 residues: MSFLIDSSIMVTSQILFFGFGWLFFMRQLFKDYEVRQYVVQVIFSVTFAFSCTMFELIIFEILGVLNSSSRYFHWKMNLCVILLILVFMVPFYIGYFIVSNIQLLHKQRLLFSCLLWLTFMYFFWKLGDPFPILSPKHGILSIEQLISRVGVIGVTLMALLSGFGAVNCPYTYMSYFLRNVTDTDILALERRLLQTMDMIISKKKRMAVARRTMFQRGEVQNKPSGLWGMLKSVTASAPGSENLTLIQQEVDALEELSRQLFLETADLYATKERIEYSKTFKGKYFNFLGYFFSIYCVWKIFMATINIVLDRVGKTDPVTRGIEITVNYLGIQFDVKFWSQHISFILVGIIIVSSIRGLLITLTKFFYAISSSKSSNVIVLLLAQIMGMYFVSSVLLIRMSMPPEYRTIITQVLGELQFNFYHRWFDVIFLVSALSSILFLYLAHKQAPEKHMAP.

5 helical membrane passes run 5–25 (IDSS…WLFF), 46–66 (VTFA…LGVL), 79–99 (LCVI…YFIV), 114–134 (CLLW…FPIL), and 150–170 (VGVI…VNCP). Residues Asn180 and Asn243 are each glycosylated (N-linked (GlcNAc...) asparagine). The next 4 membrane-spanning stretches (helical) occupy residues 290-310 (GYFF…NIVL), 343-363 (ISFI…LITL), 378-398 (VIVL…VLLI), and 425-445 (WFDV…YLAH).

This sequence belongs to the Golgi pH regulator (TC 1.A.38) family. As to quaternary structure, homotrimer. Interacts with RABL3; the interaction stabilizes GPR89B.

It localises to the golgi apparatus membrane. The catalysed reaction is iodide(out) = iodide(in). It catalyses the reaction chloride(in) = chloride(out). The enzyme catalyses bromide(in) = bromide(out). It carries out the reaction fluoride(in) = fluoride(out). Its function is as follows. Voltage-gated channel that enables the transfer of anions such as iodide, chloride, bromide and fluoride which may function in counter-ion conductance and participates in Golgi acidification. Plays a role in lymphocyte development, probably by acting as a RABL3 effector in hematopoietic cells. In Cricetulus griseus (Chinese hamster), this protein is Golgi pH regulator.